A 1088-amino-acid chain; its full sequence is RNA-directed RNA polymerase (1088 aa).

The region spanning 501 to 687 is the RdRp catalytic domain; the sequence is LSYGDVTRFL…AKRYIAGGKI (187 aa).

The protein belongs to the reoviridae RNA-directed RNA polymerase family. Interacts with VP3 (Potential). Interacts with VP2; this interaction activates VP1. Interacts with NSP5; this interaction is probably necessary for the formation of functional virus factories. Interacts with NSP2; this interaction is weak. Mg(2+) is required as a cofactor.

The protein resides in the virion. The catalysed reaction is RNA(n) + a ribonucleoside 5'-triphosphate = RNA(n+1) + diphosphate. RNA-directed RNA polymerase that is involved in both transcription and genome replication. Together with VP3 capping enzyme, forms an enzyme complex positioned near the channels situated at each of the five-fold vertices of the core. Following infection, the outermost layer of the virus is lost, leaving a double-layered particle (DLP) made up of the core and VP6 shell. VP1 then catalyzes the transcription of fully conservative plus-strand genomic RNAs that are extruded through the DLP's channels into the cytoplasm where they function as mRNAs for translation of viral proteins. One copy of each of the viral (+)RNAs is also recruited during core assembly, together with newly synthesized polymerase complexes and VP2. The polymerase of these novo-formed particles catalyzes the synthesis of complementary minus-strands leading to dsRNA formation. To do so, the polymerase specifically recognizes and binds 4 bases 5'-UGUG-3' in the conserved 3'-sequence of plus-strand RNA templates. VP2 presumably activates the autoinhibited VP1-RNA complex to coordinate packaging and genome replication. Once dsRNA synthesis is complete, the polymerase switches to the transcriptional mode, thus providing secondary transcription. This is RNA-directed RNA polymerase from Rotavirus A (isolate RVA/Human/United States/WI61/1983/G9P1A[8]) (RV-A).